Reading from the N-terminus, the 940-residue chain is Serine/threonine-protein kinase PLK4 (940 aa).

The Protein kinase domain maps to 12-265; sequence FKVLTLLGKG…LSAVLDHPFM (254 aa). ATP contacts are provided by residues 18–26 and Lys-41; that span reads LGKGSFACV. The active-site Proton acceptor is Asp-136. Disordered stretches follow at residues 262-353 and 409-529; these read HPFM…DLSR and RLFP…DAFV. A compositionally biased stretch (low complexity) spans 273 to 305; that stretch reads SKDSGSSNGGSIDSGIATISTASNATNNSSSSR. Composition is skewed to polar residues over residues 337 to 349, 440 to 465, and 494 to 519; these read FKSGQDWQPNSQD, NPASSFSTSTHSTRQQMPDSQTQPWF, and GTQTSCSDKPSGLHSQQQPILFQHNN. A Cryptic POLO box 1 (CPB1) domain is found at 563–676; that stretch reads CLKKSFPPLC…TKFVQLVKSK (114 aa). In terms of domain architecture, Cryptic POLO box 2 (CPB2) spans 677–791; it reads TPKVTLYTKF…GRRPVNPVPP (115 aa). Residues 857–935 form the POLO box domain; the sequence is KVLKSIFVPN…LSSILGLLAN (79 aa).

It belongs to the protein kinase superfamily. Ser/Thr protein kinase family. CDC5/Polo subfamily. In terms of assembly, homodimer. Post-translationally, ubiquitinated; leading to its degradation by the proteasome.

It is found in the cytoplasm. The protein localises to the cytoskeleton. The protein resides in the microtubule organizing center. It localises to the centrosome. Its subcellular location is the centriole. The enzyme catalyses L-seryl-[protein] + ATP = O-phospho-L-seryl-[protein] + ADP + H(+). The catalysed reaction is L-threonyl-[protein] + ATP = O-phospho-L-threonyl-[protein] + ADP + H(+). Serine/threonine-protein kinase that plays a central role in centriole duplication. Able to trigger procentriole formation on the surface of the parental centriole cylinder, leading to the recruitment of centriole biogenesis proteins such as sass6, cpap, ccp110, cep135 and gamma-tubulin. When overexpressed, it is able to induce centrosome amplification through the simultaneous generation of multiple procentrioles adjoining each parental centriole during S phase. Its central role in centriole replication suggests a possible role in tumorigenesis, centrosome aberrations being frequently observed in tumors. Also involved in deuterosome-mediated centriole amplification in multiciliated that can generate more than 100 centrioles. In Danio rerio (Zebrafish), this protein is Serine/threonine-protein kinase PLK4.